Here is a 278-residue protein sequence, read N- to C-terminus: Large ribosomal subunit protein uL2 (278 aa).

Disordered regions lie at residues 29–53 (PVKSLTEGKRKTGGRNNKGHVTSRG) and 221–278 (RGVA…KKKR). Basic residues predominate over residues 269–278 (IRSRHAKKKR).

It belongs to the universal ribosomal protein uL2 family. In terms of assembly, part of the 50S ribosomal subunit. Forms a bridge to the 30S subunit in the 70S ribosome.

Functionally, one of the primary rRNA binding proteins. Required for association of the 30S and 50S subunits to form the 70S ribosome, for tRNA binding and peptide bond formation. It has been suggested to have peptidyltransferase activity; this is somewhat controversial. Makes several contacts with the 16S rRNA in the 70S ribosome. The protein is Large ribosomal subunit protein uL2 of Erythrobacter litoralis (strain HTCC2594).